The following is a 101-amino-acid chain: Nucleoid-associated protein Cla_0113 (101 aa).

The protein belongs to the YbaB/EbfC family. In terms of assembly, homodimer.

The protein localises to the cytoplasm. It localises to the nucleoid. Functionally, binds to DNA and alters its conformation. May be involved in regulation of gene expression, nucleoid organization and DNA protection. This is Nucleoid-associated protein Cla_0113 from Campylobacter lari (strain RM2100 / D67 / ATCC BAA-1060).